Here is a 431-residue protein sequence, read N- to C-terminus: uncharacterized protein (431 aa).

Residues 1–258 (MPSQMREAIT…HGLIDLERAG (258 aa)) form the Peptidase S8 domain.

It belongs to the peptidase S8 family.

This is an uncharacterized protein from Sinorhizobium fredii (strain NBRC 101917 / NGR234).